Reading from the N-terminus, the 315-residue chain is L-lactate dehydrogenase (315 aa).

Residues Val-14, Asp-35, Tyr-67, and 81–82 (GV) each bind NAD(+). Substrate contacts are provided by residues Gln-84, Arg-91, and 123 to 126 (NPVD). NAD(+) contacts are provided by residues 121-123 (ASN) and Ser-146. 151-154 (DSAR) lines the substrate pocket. His-178 acts as the Proton acceptor in catalysis. Residue Tyr-219 is modified to Phosphotyrosine. Thr-228 contacts substrate.

Belongs to the LDH/MDH superfamily. LDH family. In terms of assembly, homotetramer.

It localises to the cytoplasm. The enzyme catalyses (S)-lactate + NAD(+) = pyruvate + NADH + H(+). The protein operates within fermentation; pyruvate fermentation to lactate; (S)-lactate from pyruvate: step 1/1. In terms of biological role, catalyzes the conversion of lactate to pyruvate. The protein is L-lactate dehydrogenase of Malacoplasma penetrans (strain HF-2) (Mycoplasma penetrans).